A 545-amino-acid polypeptide reads, in one-letter code: Glutamine-dependent NAD(+) synthetase (545 aa).

Residues 5–247 (LRIAMAQFDF…DQWLVVDYMR (243 aa)) enclose the CN hydrolase domain. Glu-46 acts as the Proton acceptor; for glutaminase activity in catalysis. Lys-113 serves as the catalytic For glutaminase activity. Position 119 (Tyr-119) interacts with L-glutamine. Cys-151 (nucleophile; for glutaminase activity) is an active-site residue. 2 residues coordinate L-glutamine: Ser-177 and Lys-183. Residues 269 to 545 (VWRAVVRGVQ…RYPISNAYRG (277 aa)) form a ligase region. Residue 292–299 (GLSGGIDS) participates in ATP binding. Asn-375 lines the deamido-NAD(+) pocket. Thr-399 provides a ligand contact to ATP. Deamido-NAD(+) contacts are provided by Glu-404 and Lys-516.

The protein in the C-terminal section; belongs to the NAD synthetase family.

It catalyses the reaction deamido-NAD(+) + L-glutamine + ATP + H2O = L-glutamate + AMP + diphosphate + NAD(+) + H(+). Its pathway is cofactor biosynthesis; NAD(+) biosynthesis; NAD(+) from deamido-NAD(+) (L-Gln route): step 1/1. In terms of biological role, catalyzes the ATP-dependent amidation of deamido-NAD to form NAD. Uses L-glutamine as a nitrogen source. In Xylella fastidiosa (strain Temecula1 / ATCC 700964), this protein is Glutamine-dependent NAD(+) synthetase.